Consider the following 574-residue polypeptide: 5'-nucleotidase (574 aa).

The signal sequence occupies residues 1–26; sequence MCPRAARAPATLLLALGAVLWPAAGA. Positions 36 and 38 each coordinate Zn(2+). Residues cysteine 51 and cysteine 57 are joined by a disulfide bond. The N-linked (GlcNAc...) asparagine glycan is linked to asparagine 53. Zn(2+) is bound by residues aspartate 85, asparagine 117, histidine 220, and histidine 243. N-linked (GlcNAc...) asparagine glycosylation is found at asparagine 311 and asparagine 333. Intrachain disulfides connect cysteine 353–cysteine 358 and cysteine 365–cysteine 387. Position 354 (arginine 354) interacts with AMP. Residue arginine 354 participates in IMP binding. AMP contacts are provided by asparagine 390 and arginine 395. Positions 390 and 395 each coordinate IMP. Asparagine 403 carries an N-linked (GlcNAc...) asparagine glycan. Residue phenylalanine 417 coordinates AMP. Residue phenylalanine 417 participates in IMP binding. Cysteines 476 and 479 form a disulfide. Phenylalanine 500 and aspartate 506 together coordinate AMP. Residues phenylalanine 500 and aspartate 506 each coordinate IMP. Serine 549 carries the GPI-anchor amidated serine lipid modification. A propeptide spans 550 to 574 (removed in mature form); it reads TGSHCHGSFSLIFLSLWAVIFVLYQ.

It belongs to the 5'-nucleotidase family. Homodimer. Requires Zn(2+) as cofactor.

The protein localises to the cell membrane. The enzyme catalyses a ribonucleoside 5'-phosphate + H2O = a ribonucleoside + phosphate. It catalyses the reaction a 2'-deoxyribonucleoside 5'-phosphate + H2O = a 2'-deoxyribonucleoside + phosphate. It carries out the reaction dTMP + H2O = thymidine + phosphate. The catalysed reaction is CMP + H2O = cytidine + phosphate. The enzyme catalyses IMP + H2O = inosine + phosphate. It catalyses the reaction AMP + H2O = adenosine + phosphate. It carries out the reaction GMP + H2O = guanosine + phosphate. The catalysed reaction is UMP + H2O = uridine + phosphate. The enzyme catalyses dAMP + H2O = 2'-deoxyadenosine + phosphate. It catalyses the reaction dCMP + H2O = 2'-deoxycytidine + phosphate. Its activity is regulated as follows. Inhibited by adenosine 5'-(alpha,beta-methylene)-diphosphate (AMPCP). Catalyzes the hydrolysis of nucleotide monophosphates, releasing inorganic phosphate and the corresponding nucleoside, with AMP being the preferred substrate. Shows a preference for ribonucleotide monophosphates over their equivalent deoxyribose forms. Other substrates include IMP, UMP, GMP, CMP, dAMP, dCMP, dTMP, NAD and NMN. The sequence is that of 5'-nucleotidase (NT5E) from Homo sapiens (Human).